The sequence spans 209 residues: J domain-containing protein spf31 (209 aa).

Positions 31–96 constitute a J domain; that stretch reads NAYDVLDILP…KIRESLDSAY (66 aa). Disordered regions lie at residues 149 to 175 and 187 to 209; these read ANQQREQARQDEIARERKRRVESEKVW and QDFLHKTKKNNLKKKNKKPRVLG. The span at 154–175 shows a compositional bias: basic and acidic residues; it reads EQARQDEIARERKRRVESEKVW. Basic residues predominate over residues 192 to 209; sequence KTKKNNLKKKNKKPRVLG.

The sequence is that of J domain-containing protein spf31 (spf31) from Schizosaccharomyces pombe (strain 972 / ATCC 24843) (Fission yeast).